The following is a 623-amino-acid chain: Putative ABC transporter ATP-binding protein MG014 homolog (623 aa).

One can recognise an ABC transmembrane type-1 domain in the interval 16 to 325 (LILAPLFTFA…YIVLGLILTS (310 aa)). Helical transmembrane passes span 27–47 (IIID…VFSI), 86–106 (VILL…CASI), 157–177 (FLRL…FAIA), 180–200 (SDMS…IGIL), 266–286 (NIPF…LLVF), and 307–327 (IFAF…TSLT). The ABC transporter domain maps to 365–611 (LEFKNVAFGL…CDIYVKMKQA (247 aa)). 400–407 (GPTGSGKS) serves as a coordination point for ATP.

The protein belongs to the ABC transporter superfamily.

Its subcellular location is the cell membrane. The protein is Putative ABC transporter ATP-binding protein MG014 homolog of Mycoplasma pneumoniae (strain ATCC 29342 / M129 / Subtype 1) (Mycoplasmoides pneumoniae).